The sequence spans 410 residues: Gamma-glutamyl phosphate reductase (410 aa).

The protein belongs to the gamma-glutamyl phosphate reductase family.

The protein resides in the cytoplasm. The catalysed reaction is L-glutamate 5-semialdehyde + phosphate + NADP(+) = L-glutamyl 5-phosphate + NADPH + H(+). The protein operates within amino-acid biosynthesis; L-proline biosynthesis; L-glutamate 5-semialdehyde from L-glutamate: step 2/2. Its function is as follows. Catalyzes the NADPH-dependent reduction of L-glutamate 5-phosphate into L-glutamate 5-semialdehyde and phosphate. The product spontaneously undergoes cyclization to form 1-pyrroline-5-carboxylate. This chain is Gamma-glutamyl phosphate reductase, found in Campylobacter jejuni subsp. jejuni serotype O:2 (strain ATCC 700819 / NCTC 11168).